We begin with the raw amino-acid sequence, 477 residues long: Aspartyl/glutamyl-tRNA(Asn/Gln) amidotransferase subunit B (477 aa).

It belongs to the GatB/GatE family. GatB subfamily. As to quaternary structure, heterotrimer of A, B and C subunits.

It catalyses the reaction L-glutamyl-tRNA(Gln) + L-glutamine + ATP + H2O = L-glutaminyl-tRNA(Gln) + L-glutamate + ADP + phosphate + H(+). The enzyme catalyses L-aspartyl-tRNA(Asn) + L-glutamine + ATP + H2O = L-asparaginyl-tRNA(Asn) + L-glutamate + ADP + phosphate + 2 H(+). In terms of biological role, allows the formation of correctly charged Asn-tRNA(Asn) or Gln-tRNA(Gln) through the transamidation of misacylated Asp-tRNA(Asn) or Glu-tRNA(Gln) in organisms which lack either or both of asparaginyl-tRNA or glutaminyl-tRNA synthetases. The reaction takes place in the presence of glutamine and ATP through an activated phospho-Asp-tRNA(Asn) or phospho-Glu-tRNA(Gln). This chain is Aspartyl/glutamyl-tRNA(Asn/Gln) amidotransferase subunit B, found in Lactococcus lactis subsp. cremoris (strain MG1363).